The following is a 199-amino-acid chain: NADH-quinone oxidoreductase subunit C (199 aa).

Belongs to the complex I 30 kDa subunit family. NDH-1 is composed of 14 different subunits. Subunits NuoB, C, D, E, F, and G constitute the peripheral sector of the complex.

The protein localises to the cell inner membrane. It catalyses the reaction a quinone + NADH + 5 H(+)(in) = a quinol + NAD(+) + 4 H(+)(out). NDH-1 shuttles electrons from NADH, via FMN and iron-sulfur (Fe-S) centers, to quinones in the respiratory chain. The immediate electron acceptor for the enzyme in this species is believed to be ubiquinone. Couples the redox reaction to proton translocation (for every two electrons transferred, four hydrogen ions are translocated across the cytoplasmic membrane), and thus conserves the redox energy in a proton gradient. This is NADH-quinone oxidoreductase subunit C from Cupriavidus pinatubonensis (strain JMP 134 / LMG 1197) (Cupriavidus necator (strain JMP 134)).